Consider the following 303-residue polypeptide: Quinolinate synthase (303 aa).

2 residues coordinate iminosuccinate: H24 and S41. C86 lines the [4Fe-4S] cluster pocket. Residues 112–114 (YVN) and S129 each bind iminosuccinate. C172 is a binding site for [4Fe-4S] cluster. Residues 198–200 (HPE) and T215 each bind iminosuccinate. C260 is a [4Fe-4S] cluster binding site.

The protein belongs to the quinolinate synthase family. Type 2 subfamily. [4Fe-4S] cluster is required as a cofactor.

It localises to the cytoplasm. It catalyses the reaction iminosuccinate + dihydroxyacetone phosphate = quinolinate + phosphate + 2 H2O + H(+). The protein operates within cofactor biosynthesis; NAD(+) biosynthesis; quinolinate from iminoaspartate: step 1/1. Functionally, catalyzes the condensation of iminoaspartate with dihydroxyacetone phosphate to form quinolinate. The protein is Quinolinate synthase of Alkaliphilus metalliredigens (strain QYMF).